Consider the following 311-residue polypeptide: Giardin subunit alpha-8 (311 aa).

4 Annexin repeats span residues 5 to 73 (RKAY…IRCW), 75 to 146 (NRHE…DRWM), 154 to 223 (NNVK…AAHY), and 227 to 295 (EPSK…SLWR).

This sequence belongs to the annexin family. Giardin subunit alpha subfamily.

Its subcellular location is the cytoplasm. The protein resides in the cytoskeleton. Giardins are involved in parasite attachment to the intestinal mucosa and in the cytoskeletal disassembly and reassembly that marks the transition from infectious trophozoite to transmissible cyst. They may interact with other cytoskeletal proteins such as microtubules in the microribbons or crossbridges, to maintain the integrity of the ventral disk. The polypeptide is Giardin subunit alpha-8 (Giardia intestinalis (Giardia lamblia)).